The chain runs to 199 residues: Dephospho-CoA kinase (199 aa).

Positions 3 to 199 (ILGLTGSIGM…EVVKMPQRRA (197 aa)) constitute a DPCK domain. 11–16 (GMGKST) serves as a coordination point for ATP.

It belongs to the CoaE family.

It is found in the cytoplasm. The enzyme catalyses 3'-dephospho-CoA + ATP = ADP + CoA + H(+). The protein operates within cofactor biosynthesis; coenzyme A biosynthesis; CoA from (R)-pantothenate: step 5/5. Catalyzes the phosphorylation of the 3'-hydroxyl group of dephosphocoenzyme A to form coenzyme A. In Bradyrhizobium diazoefficiens (strain JCM 10833 / BCRC 13528 / IAM 13628 / NBRC 14792 / USDA 110), this protein is Dephospho-CoA kinase.